The following is a 208-amino-acid chain: Dephospho-CoA kinase (208 aa).

One can recognise a DPCK domain in the interval 8–208; the sequence is LVGVTGGIGS…VYQSLLTVVE (201 aa). 16-21 is an ATP binding site; the sequence is GSGKST.

Belongs to the CoaE family.

The protein resides in the cytoplasm. It catalyses the reaction 3'-dephospho-CoA + ATP = ADP + CoA + H(+). It functions in the pathway cofactor biosynthesis; coenzyme A biosynthesis; CoA from (R)-pantothenate: step 5/5. In terms of biological role, catalyzes the phosphorylation of the 3'-hydroxyl group of dephosphocoenzyme A to form coenzyme A. In Chlorobaculum tepidum (strain ATCC 49652 / DSM 12025 / NBRC 103806 / TLS) (Chlorobium tepidum), this protein is Dephospho-CoA kinase.